The primary structure comprises 446 residues: Questin oxidase (446 aa).

This sequence belongs to the questin oxidase family.

The catalysed reaction is questin + NADPH + O2 = demethylsulochrin + NADP(+). It functions in the pathway secondary metabolite biosynthesis. Its function is as follows. Questin oxidase; part of the gene cluster that mediates the biosynthesis of geodin, an intermediate in the biosynthesis of other natural products. The pathway begins with the synthesis of atrochrysone thioester by the polyketide synthase (PKS) gedC. The atrochrysone carboxyl ACP thioesterase gedB then breaks the thioester bond and releases the atrochrysone carboxylic acid from gedC. The atrochrysone carboxylic acid is then converted to atrochrysone which is further transformed into emodinanthrone. The next step is performed by the emodinanthrone oxygenase gedH that catalyzes the oxidation of emodinanthrone to emodin. Emodin O-methyltransferase encoded probably by gedA then catalyzes methylation of the 8-hydroxy group of emodin to form questin. Ring cleavage of questin by questin oxidase gedK leads to desmethylsulochrin via several intermediates including questin epoxide. Another methylation step probably catalyzed by methyltransferase gedG leads to the formation of sulochrin which is further converted to dihydrogeodin by the sulochrin halogenase gedL. Finally, the dihydrogeodin oxidase gedJ catalyzes the stereospecific phenol oxidative coupling reaction converting dihydrogeodin to geodin. The polypeptide is Questin oxidase (Aspergillus terreus (strain NIH 2624 / FGSC A1156)).